The sequence spans 128 residues: Saitohin (128 aa).

The span at 77 to 87 (SYSSEENSRNG) shows a compositional bias: polar residues. Positions 77–128 (SYSSEENSRNGAEQGRQLSIEGPFQGQNCPSHPAAALPLPMRGESQATSCQV) are disordered.

Interacts with PRDX6.

Its subcellular location is the cytoplasm. It localises to the nucleus. This chain is Saitohin (STH), found in Pan troglodytes (Chimpanzee).